The chain runs to 161 residues: Protein-export protein SecB (161 aa).

It belongs to the SecB family. Homotetramer, a dimer of dimers. One homotetramer interacts with 1 SecA dimer.

It localises to the cytoplasm. Functionally, one of the proteins required for the normal export of preproteins out of the cell cytoplasm. It is a molecular chaperone that binds to a subset of precursor proteins, maintaining them in a translocation-competent state. It also specifically binds to its receptor SecA. In Pseudomonas fluorescens (strain Pf0-1), this protein is Protein-export protein SecB.